The following is a 179-amino-acid chain: O-acetyl-ADP-ribose deacetylase (179 aa).

Residues 1–175 (MTSRLQVIQG…LYARLLTQQG (175 aa)) form the Macro domain. Residues 11–12 (DI), Asn-25, 33–35 (GVD), and 122–126 (STGVY) contribute to the substrate site. Asp-35 acts as the Proton acceptor in catalysis.

Belongs to the MacroD-type family. YmdB subfamily. Homodimer. Interacts with RNase III.

The catalysed reaction is 3''-O-acetyl-ADP-D-ribose + H2O = ADP-D-ribose + acetate + H(+). It catalyses the reaction 2''-O-acetyl-ADP-D-ribose + H2O = ADP-D-ribose + acetate + H(+). Functionally, deacetylates O-acetyl-ADP ribose to yield ADP-ribose and free acetate. Down-regulates ribonuclease 3 (RNase III) activity. Acts by interacting directly with the region of the ribonuclease that is required for dimerization/activation. The chain is O-acetyl-ADP-ribose deacetylase from Salmonella gallinarum (strain 287/91 / NCTC 13346).